The chain runs to 748 residues: Polyribonucleotide nucleotidyltransferase (748 aa).

Residues D487 and D493 each coordinate Mg(2+). Positions 554–613 (PSTTTIKIDKDKIRDIIGPGGKVIKEICETSGAKIDISDDGTVSVYASDRDKLKVALDKI) constitute a KH domain. Residues 623–691 (GEIFNGTVVK…NKGKAKLTIK (69 aa)) enclose the S1 motif domain. The tract at residues 691 to 748 (KNADKDKSSNNTKPKTNVNNTKDNSEPEQRRDSSKKRAWNEDNNAETAEVITERKYFN) is disordered. Over residues 699–712 (SNNTKPKTNVNNTK) the composition is skewed to low complexity. Residues 713-722 (DNSEPEQRRD) are compositionally biased toward basic and acidic residues.

It belongs to the polyribonucleotide nucleotidyltransferase family. Mg(2+) is required as a cofactor.

It is found in the cytoplasm. The enzyme catalyses RNA(n+1) + phosphate = RNA(n) + a ribonucleoside 5'-diphosphate. Involved in mRNA degradation. Catalyzes the phosphorolysis of single-stranded polyribonucleotides processively in the 3'- to 5'-direction. This chain is Polyribonucleotide nucleotidyltransferase, found in Rickettsia africae (strain ESF-5).